The primary structure comprises 141 residues: Protein GAT3 (141 aa).

A GATA-type zinc finger spans residues 72–98; it reads CPQCAVIKTSPQWREGPDGEVTLCNAC.

The polypeptide is Protein GAT3 (GAT3) (Saccharomyces cerevisiae (strain ATCC 204508 / S288c) (Baker's yeast)).